Here is a 295-residue protein sequence, read N- to C-terminus: Universal stress protein Mb2028c (295 aa).

ATP is bound by residues glycine 13, 117–123 (GSSGRGA), 131–132 (SV), glycine 165, aspartate 198, 262–268 (GSHGRGG), and 276–278 (SVS).

The protein belongs to the universal stress protein A family.

The sequence is that of Universal stress protein Mb2028c from Mycobacterium bovis (strain ATCC BAA-935 / AF2122/97).